The sequence spans 165 residues: Coronafacic acid dehydratase (165 aa).

His-62 is a catalytic residue.

It belongs to the thioester dehydratase family.

It functions in the pathway phytotoxin biosynthesis; coronatine biosynthesis. The polypeptide is Coronafacic acid dehydratase (cfa2) (Pseudomonas savastanoi pv. glycinea (Pseudomonas syringae pv. glycinea)).